The chain runs to 415 residues: Granaticin polyketide putative beta-ketoacyl synthase 2 (415 aa).

Residues 6-406 (RRRAVVTGLS…GFNSAVVVTL (401 aa)) enclose the Ketosynthase family 3 (KS3) domain.

It belongs to the thiolase-like superfamily. Beta-ketoacyl-ACP synthases family.

The protein operates within antibiotic biosynthesis; granaticin biosynthesis. The protein is Granaticin polyketide putative beta-ketoacyl synthase 2 (gra-orf2) of Streptomyces violaceoruber.